The primary structure comprises 351 residues: Minor outer capsid protein P9 (351 aa).

Disordered regions lie at residues 245-281 (GGVPAALPQPDTTDDESPVTKPGASAPTVSKGADQPE) and 288-307 (KKVDASKDAPPKAVSSGNVS). Basic and acidic residues predominate over residues 288 to 297 (KKVDASKDAP).

It belongs to the phytoreovirus minor outer capsid protein P9 family.

Its subcellular location is the virion. It localises to the host cytoplasm. Minor outer capsid protein. The polypeptide is Minor outer capsid protein P9 (Rice dwarf virus (RDV)).